The primary structure comprises 42 residues: Photosystem II reaction center protein J (42 aa).

A helical transmembrane segment spans residues isoleucine 10–phenylalanine 30.

The protein belongs to the PsbJ family. PSII is composed of 1 copy each of membrane proteins PsbA, PsbB, PsbC, PsbD, PsbE, PsbF, PsbH, PsbI, PsbJ, PsbK, PsbL, PsbM, PsbT, PsbX, PsbY, PsbZ, Psb30/Ycf12, at least 3 peripheral proteins of the oxygen-evolving complex and a large number of cofactors. It forms dimeric complexes.

Its subcellular location is the plastid. It localises to the chloroplast thylakoid membrane. Functionally, one of the components of the core complex of photosystem II (PSII). PSII is a light-driven water:plastoquinone oxidoreductase that uses light energy to abstract electrons from H(2)O, generating O(2) and a proton gradient subsequently used for ATP formation. It consists of a core antenna complex that captures photons, and an electron transfer chain that converts photonic excitation into a charge separation. The protein is Photosystem II reaction center protein J of Chlamydomonas reinhardtii (Chlamydomonas smithii).